We begin with the raw amino-acid sequence, 314 residues long: MTIRLLGRTEIRHLAKSIDFRPRKSFGQNFVHDANTVRRIVSASSVNRSDHVLEVGPGLGSLTLALLDRGARVTAVEIDPVLATQLPTTIAAHSHSEVNRLTVLNRDILTFKQSDMTEMPTALVANLPYNVAVPALLHLLAEFPSIRTVMVMVQAEVAERLAAEPGGKDYGVPSAKVRFFGNVRRYGMVSPTVFWPIPRVYSGLVRIDRYETSPWPTDTEFQEQVFELIDIAFAQRRKTSRNAFAEWAGSGNESASRLLAASIDPSRRGETLSINDFVRLLQRSADWHTVPKADDAGDDADAQAKADGAQVSTL.

The S-adenosyl-L-methionine site is built by Asn-29, Val-31, Gly-56, Glu-77, Asp-107, and Asn-126. Positions 291-314 (PKADDAGDDADAQAKADGAQVSTL) are disordered. The span at 303 to 314 (QAKADGAQVSTL) shows a compositional bias: low complexity.

Belongs to the class I-like SAM-binding methyltransferase superfamily. rRNA adenine N(6)-methyltransferase family. RsmA subfamily.

The protein resides in the cytoplasm. It catalyses the reaction adenosine(1518)/adenosine(1519) in 16S rRNA + 4 S-adenosyl-L-methionine = N(6)-dimethyladenosine(1518)/N(6)-dimethyladenosine(1519) in 16S rRNA + 4 S-adenosyl-L-homocysteine + 4 H(+). In terms of biological role, specifically dimethylates two adjacent adenosines (A1518 and A1519) in the loop of a conserved hairpin near the 3'-end of 16S rRNA in the 30S particle. May play a critical role in biogenesis of 30S subunits. The chain is Ribosomal RNA small subunit methyltransferase A from Mycolicibacterium gilvum (strain PYR-GCK) (Mycobacterium gilvum (strain PYR-GCK)).